The primary structure comprises 372 residues: Adaptive-response sensory kinase SasA (372 aa).

The region spanning Met-147–Gln-360 is the Histidine kinase domain. The residue at position 150 (His-150) is a Phosphohistidine; by autocatalysis.

As to quaternary structure, homooligomerizes. Interacts with KaiC. Participates in the KaiBC complex, whose core is composed of a KaiC homohexamer and 6 KaiB.

It catalyses the reaction ATP + protein L-histidine = ADP + protein N-phospho-L-histidine.. Member of the two-component regulatory system SasA/RpaA involved in genome-wide circadian gene expression. One of several clock output pathways. Participates in the Kai clock protein complex, the main circadian regulator in cyanobacteria, via its interaction with KaiC. KaiC enhances the autophosphorylation activity of SasA, which then transfers its phosphate group to RpaA to activate it. In addition to its output function, recruits fold-shifted KaiB (KaiB(fs)) to KaiC to cooperatively form the KaiB(6):KaiC(6) complex (independent of SasA kinase activity). Required for robustness of the circadian rhythm of gene expression and is involved in clock output, also required for adaptation to light/dark cycles. This Prochlorococcus marinus (strain MIT 9215) protein is Adaptive-response sensory kinase SasA.